The chain runs to 291 residues: MEMO1 family protein TON_0132 (291 aa).

This sequence belongs to the MEMO1 family.

The polypeptide is MEMO1 family protein TON_0132 (Thermococcus onnurineus (strain NA1)).